The primary structure comprises 679 residues: DNA-directed RNA polymerase subunit beta' (679 aa).

4 residues coordinate Zn(2+): Cys69, Cys71, Cys84, and Cys87. Positions 486, 488, and 490 each coordinate Mg(2+).

It belongs to the RNA polymerase beta' chain family. RpoC1 subfamily. As to quaternary structure, in plastids the minimal PEP RNA polymerase catalytic core is composed of four subunits: alpha, beta, beta', and beta''. When a (nuclear-encoded) sigma factor is associated with the core the holoenzyme is formed, which can initiate transcription. Mg(2+) is required as a cofactor. Requires Zn(2+) as cofactor.

It localises to the plastid. The protein resides in the chloroplast. The enzyme catalyses RNA(n) + a ribonucleoside 5'-triphosphate = RNA(n+1) + diphosphate. Its function is as follows. DNA-dependent RNA polymerase catalyzes the transcription of DNA into RNA using the four ribonucleoside triphosphates as substrates. This Physcomitrium patens (Spreading-leaved earth moss) protein is DNA-directed RNA polymerase subunit beta'.